Reading from the N-terminus, the 355-residue chain is Protein RecA (355 aa).

Position 78 to 85 (78 to 85) interacts with ATP; that stretch reads GPESSGKT.

This sequence belongs to the RecA family.

Its subcellular location is the cytoplasm. Functionally, can catalyze the hydrolysis of ATP in the presence of single-stranded DNA, the ATP-dependent uptake of single-stranded DNA by duplex DNA, and the ATP-dependent hybridization of homologous single-stranded DNAs. It interacts with LexA causing its activation and leading to its autocatalytic cleavage. The chain is Protein RecA from Rhodobacter capsulatus (Rhodopseudomonas capsulata).